Consider the following 224-residue polypeptide: Urease accessory protein UreF (224 aa).

Belongs to the UreF family. UreD, UreF and UreG form a complex that acts as a GTP-hydrolysis-dependent molecular chaperone, activating the urease apoprotein by helping to assemble the nickel containing metallocenter of UreC. The UreE protein probably delivers the nickel.

It is found in the cytoplasm. In terms of biological role, required for maturation of urease via the functional incorporation of the urease nickel metallocenter. The polypeptide is Urease accessory protein UreF (Citrobacter koseri (strain ATCC BAA-895 / CDC 4225-83 / SGSC4696)).